Here is a 100-residue protein sequence, read N- to C-terminus: Urease subunit gamma (100 aa).

The protein belongs to the urease gamma subunit family. In terms of assembly, heterotrimer of UreA (gamma), UreB (beta) and UreC (alpha) subunits. Three heterotrimers associate to form the active enzyme.

It localises to the cytoplasm. The enzyme catalyses urea + 2 H2O + H(+) = hydrogencarbonate + 2 NH4(+). It functions in the pathway nitrogen metabolism; urea degradation; CO(2) and NH(3) from urea (urease route): step 1/1. The polypeptide is Urease subunit gamma (Burkholderia orbicola (strain MC0-3)).